We begin with the raw amino-acid sequence, 380 residues long: Queuine tRNA-ribosyltransferase (380 aa).

Asp-95 functions as the Proton acceptor in the catalytic mechanism. Residues 95–99, Asp-149, Gln-192, and Gly-219 each bind substrate; that span reads DSGGF. The segment at 250 to 256 is RNA binding; the sequence is GVGSPDS. Asp-269 serves as the catalytic Nucleophile. The tract at residues 274 to 278 is RNA binding; important for wobble base 34 recognition; that stretch reads TRIGR. Zn(2+) contacts are provided by Cys-307, Cys-309, Cys-312, and His-338.

It belongs to the queuine tRNA-ribosyltransferase family. In terms of assembly, homodimer. Within each dimer, one monomer is responsible for RNA recognition and catalysis, while the other monomer binds to the replacement base PreQ1. Zn(2+) serves as cofactor.

It catalyses the reaction 7-aminomethyl-7-carbaguanine + guanosine(34) in tRNA = 7-aminomethyl-7-carbaguanosine(34) in tRNA + guanine. It functions in the pathway tRNA modification; tRNA-queuosine biosynthesis. Its function is as follows. Catalyzes the base-exchange of a guanine (G) residue with the queuine precursor 7-aminomethyl-7-deazaguanine (PreQ1) at position 34 (anticodon wobble position) in tRNAs with GU(N) anticodons (tRNA-Asp, -Asn, -His and -Tyr). Catalysis occurs through a double-displacement mechanism. The nucleophile active site attacks the C1' of nucleotide 34 to detach the guanine base from the RNA, forming a covalent enzyme-RNA intermediate. The proton acceptor active site deprotonates the incoming PreQ1, allowing a nucleophilic attack on the C1' of the ribose to form the product. After dissociation, two additional enzymatic reactions on the tRNA convert PreQ1 to queuine (Q), resulting in the hypermodified nucleoside queuosine (7-(((4,5-cis-dihydroxy-2-cyclopenten-1-yl)amino)methyl)-7-deazaguanosine). The polypeptide is Queuine tRNA-ribosyltransferase (Geobacillus kaustophilus (strain HTA426)).